Here is a 769-residue protein sequence, read N- to C-terminus: Serine/threonine-protein kinase PLK4 (769 aa).

The Protein kinase domain occupies 14–267 (YEVQHLLGKG…LEAVLCHPFM (254 aa)). ATP contacts are provided by residues 20-28 (LGKGGFATV) and Lys-43. The active-site Proton acceptor is Asp-138. One can recognise a Cryptic POLO box 1 (CPB1) domain in the interval 381-498 (EDRISVPPLN…ARFVGLVKSK (118 aa)). The Cryptic POLO box 2 (CPB2) domain maps to 499–602 (TPKVTYFSTL…GRRPITDVQP (104 aa)). Positions 660 to 739 (PIKRINVPDI…IPNIQLKLKT (80 aa)) constitute a POLO box domain.

It belongs to the protein kinase superfamily. Ser/Thr protein kinase family. CDC5/Polo subfamily. In terms of assembly, homodimer. Ubiquitinated by the SCF(Slimb) ubiquitin ligase complex; leading to its degradation by the proteasome during interphase and regulating centriole number and ensuring the block to centriole reduplication.

Its subcellular location is the cytoplasm. The protein resides in the cytoskeleton. It localises to the microtubule organizing center. It is found in the centrosome. The protein localises to the centriole. It catalyses the reaction L-seryl-[protein] + ATP = O-phospho-L-seryl-[protein] + ADP + H(+). The catalysed reaction is L-threonyl-[protein] + ATP = O-phospho-L-threonyl-[protein] + ADP + H(+). Serine/threonine-protein kinase that plays a central role in centriole duplication. Able to trigger procentriole formation on the surface of the mother centriole cylinder, using mother centriole as a platform, leading to the recruitment of centriole biogenesis proteins such as sas-6. When overexpressed, it is able to induce centrosome amplification through the simultaneous generation of multiple procentrioles adjoining each parental centriole during S phase. Centrosome amplification following overexpression can initiate tumorigenesis, highlighting the importance of centrosome regulation in cancers. The polypeptide is Serine/threonine-protein kinase PLK4 (SAK) (Drosophila simulans (Fruit fly)).